A 485-amino-acid polypeptide reads, in one-letter code: Glutamyl-tRNA(Gln) amidotransferase subunit A (485 aa).

Active-site charge relay system residues include K78 and S153. The active-site Acyl-ester intermediate is the S177.

Belongs to the amidase family. GatA subfamily. Heterotrimer of A, B and C subunits.

The enzyme catalyses L-glutamyl-tRNA(Gln) + L-glutamine + ATP + H2O = L-glutaminyl-tRNA(Gln) + L-glutamate + ADP + phosphate + H(+). In terms of biological role, allows the formation of correctly charged Gln-tRNA(Gln) through the transamidation of misacylated Glu-tRNA(Gln) in organisms which lack glutaminyl-tRNA synthetase. The reaction takes place in the presence of glutamine and ATP through an activated gamma-phospho-Glu-tRNA(Gln). The protein is Glutamyl-tRNA(Gln) amidotransferase subunit A of Bacillus anthracis (strain A0248).